Here is a 343-residue protein sequence, read N- to C-terminus: Heat-inducible transcription repressor HrcA (343 aa).

It belongs to the HrcA family.

Functionally, negative regulator of class I heat shock genes (grpE-dnaK-dnaJ and groELS operons). Prevents heat-shock induction of these operons. This is Heat-inducible transcription repressor HrcA from Mycoplasma genitalium (strain ATCC 33530 / DSM 19775 / NCTC 10195 / G37) (Mycoplasmoides genitalium).